A 378-amino-acid polypeptide reads, in one-letter code: Cobalt-precorrin-5B C(1)-methyltransferase (378 aa).

The protein belongs to the CbiD family.

The enzyme catalyses Co-precorrin-5B + S-adenosyl-L-methionine = Co-precorrin-6A + S-adenosyl-L-homocysteine. It participates in cofactor biosynthesis; adenosylcobalamin biosynthesis; cob(II)yrinate a,c-diamide from sirohydrochlorin (anaerobic route): step 6/10. Catalyzes the methylation of C-1 in cobalt-precorrin-5B to form cobalt-precorrin-6A. The protein is Cobalt-precorrin-5B C(1)-methyltransferase of Thermoplasma volcanium (strain ATCC 51530 / DSM 4299 / JCM 9571 / NBRC 15438 / GSS1).